Consider the following 564-residue polypeptide: Probable lysosomal cobalamin transporter (564 aa).

9 consecutive transmembrane segments (helical) span residues Leu-8–Ile-28, Val-41–Val-61, Thr-94–Phe-114, Tyr-144–Thr-164, Ala-188–Thr-208, Leu-312–Thr-332, Val-375–Phe-395, Leu-418–Ile-438, and Phe-506–Leu-526.

It belongs to the LIMR family. LMBRD1 subfamily.

Its subcellular location is the lysosome membrane. In terms of biological role, probable lysosomal cobalamin transporter. Required to export cobalamin from lysosomes allowing its conversion to cofactors. This is Probable lysosomal cobalamin transporter from Aspergillus clavatus (strain ATCC 1007 / CBS 513.65 / DSM 816 / NCTC 3887 / NRRL 1 / QM 1276 / 107).